An 861-amino-acid chain; its full sequence is Probable alpha,alpha-trehalose-phosphate synthase [UDP-forming] 10 (861 aa).

S5 is modified (phosphoserine). T32 bears the Phosphothreonine mark. Residues 59-546 are glycosyltransferase; sequence ERKIIVANFL…ARSFSQDLER (488 aa).

In the N-terminal section; belongs to the glycosyltransferase 20 family. The protein in the C-terminal section; belongs to the trehalose phosphatase family.

It carries out the reaction D-glucose 6-phosphate + UDP-alpha-D-glucose = alpha,alpha-trehalose 6-phosphate + UDP + H(+). In Arabidopsis thaliana (Mouse-ear cress), this protein is Probable alpha,alpha-trehalose-phosphate synthase [UDP-forming] 10 (TPS10).